We begin with the raw amino-acid sequence, 427 residues long: Mitogen-activated protein kinase 8B (427 aa).

The region spanning 26–321 is the Protein kinase domain; it reads YQNLRPIGSG…VDEALQHPYI (296 aa). Residues 33–40 and K55 each bind ATP; that span reads GSGAQGIV. D151 functions as the Proton acceptor in the catalytic mechanism. Phosphothreonine is present on T183. Positions 183 to 185 match the TXY motif; sequence TPY. The residue at position 185 (Y185) is a Phosphotyrosine. Residues 372–427 form a disordered region; it reads IRGQPSPIGAAVINGSPQPSSSSSINDVSSMSTEPTVASDTDSSLEASAGPLSCCR. The segment covering 387–403 has biased composition (low complexity); it reads SPQPSSSSSINDVSSMS. The span at 404 to 417 shows a compositional bias: polar residues; the sequence is TEPTVASDTDSSLE.

This sequence belongs to the protein kinase superfamily. CMGC Ser/Thr protein kinase family. MAP kinase subfamily. The cofactor is Mg(2+). Post-translationally, dually phosphorylated on Thr-183 and Tyr-185, which activates the enzyme. Expressed at high levels in the ovary and at lower levels in brain, gill, heart, spleen, liver, kidney, muscle, bladder and gut.

The enzyme catalyses L-seryl-[protein] + ATP = O-phospho-L-seryl-[protein] + ADP + H(+). It catalyses the reaction L-threonyl-[protein] + ATP = O-phospho-L-threonyl-[protein] + ADP + H(+). Activated by threonine and tyrosine phosphorylation. Its function is as follows. Responds to activation by environmental stress and pro-inflammatory cytokines by phosphorylating a number of transcription factors, primarily components of AP-1 such as c-Jun and ATF2 and thus regulates AP-1 transcriptional activity. May play a role in the regulation of the circadian clock. This chain is Mitogen-activated protein kinase 8B (mapk8b), found in Cyprinus carpio (Common carp).